Here is a 212-residue protein sequence, read N- to C-terminus: Ribonuclease HII (212 aa).

Positions 22–212 (ILIAGLDEAG…APLKGMIDGL (191 aa)) constitute an RNase H type-2 domain. A divalent metal cation contacts are provided by Asp-28, Glu-29, and Asp-123.

This sequence belongs to the RNase HII family. Mn(2+) is required as a cofactor. Requires Mg(2+) as cofactor.

It localises to the cytoplasm. It catalyses the reaction Endonucleolytic cleavage to 5'-phosphomonoester.. Its function is as follows. Endonuclease that specifically degrades the RNA of RNA-DNA hybrids. The sequence is that of Ribonuclease HII from Dehalococcoides mccartyi (strain ATCC BAA-2100 / JCM 16839 / KCTC 5957 / BAV1).